The sequence spans 354 residues: Protein-arginine kinase (354 aa).

Residues 24 to 254 (IVLSSRIRLA…QQIIQQEKMA (231 aa)) enclose the Phosphagen kinase C-terminal domain. ATP is bound by residues 27 to 31 (SSRIR), histidine 92, arginine 125, 176 to 180 (RASVM), and 207 to 212 (RGIYGE). Positions 337–342 (RDYRRA) match the RDXXRA motif of the pArg binding pocket involved in allosteric regulation motif.

This sequence belongs to the ATP:guanido phosphotransferase family.

It catalyses the reaction L-arginyl-[protein] + ATP = N(omega)-phospho-L-arginyl-[protein] + ADP + H(+). With respect to regulation, appears to be allosterically activated by the binding of pArg-containing polypeptides to the pArg-binding pocket localized in the C-terminal domain of McsB. Its function is as follows. Catalyzes the specific phosphorylation of arginine residues in a large number of proteins. Is part of the bacterial stress response system. Protein arginine phosphorylation has a physiologically important role and is involved in the regulation of many critical cellular processes, such as protein homeostasis, motility, competence, and stringent and stress responses, by regulating gene expression and protein activity. In Bacillus cereus (strain ATCC 10987 / NRS 248), this protein is Protein-arginine kinase.